We begin with the raw amino-acid sequence, 66 residues long: Large ribosomal subunit protein uL29 (66 aa).

The protein belongs to the universal ribosomal protein uL29 family.

The protein is Large ribosomal subunit protein uL29 of Geobacillus thermodenitrificans (strain NG80-2).